The sequence spans 1529 residues: ABC multidrug transporter AFR2 (1529 aa).

The ABC transporter 1 domain maps to 144-394 (GSLRDLIGNR…FVDMGFHCPS (251 aa)). Asparagine 235 and asparagine 318 each carry an N-linked (GlcNAc...) asparagine glycan. The next 5 helical transmembrane spans lie at 510 to 530 (LFGN…LPVT), 539 to 559 (ALLF…ILIL), 589 to 609 (IPYK…MTNL), 614 to 634 (GAYF…SMLF), and 648 to 668 (LAPA…AVNV). Asparagine 742 carries an N-linked (GlcNAc...) asparagine glycan. Residues 757 to 777 (GILIGFFLFFTAIYLTATEFI) traverse the membrane as a helical segment. Positions 845 to 1087 (FSWKDVVYDI…ILIDYFEKNG (243 aa)) constitute an ABC transporter 2 domain. Residue 881–888 (GVSGAGKT) coordinates ATP. Helical transmembrane passes span 1193-1213 (YIWA…FSFF), 1229-1249 (VFMM…NFVT), 1268-1288 (IFIL…GVII), 1314-1334 (LMFL…IMIV), and 1353-1373 (MCLI…FWVF). A glycan (N-linked (GlcNAc...) asparagine) is linked at asparagine 1434. The helical transmembrane segment at 1465–1485 (FGLLWVYVVFNVIAAIGIYWL) threads the bilayer. A compositionally biased stretch (basic and acidic residues) spans 1493–1505 (GKERASEPEDVQE). Positions 1493 to 1529 (GKERASEPEDVQEKQVPAQSTEKKYQSISRSSESTVA) are disordered. The span at 1518-1529 (QSISRSSESTVA) shows a compositional bias: polar residues.

This sequence belongs to the ABC transporter superfamily. ABCG family. PDR (TC 3.A.1.205) subfamily.

The protein localises to the cell membrane. The catalysed reaction is itraconazole(in) + ATP + H2O = itraconazole(out) + ADP + phosphate + H(+). It carries out the reaction voriconazole(in) + ATP + H2O = voriconazole(out) + ADP + phosphate + H(+). The enzyme catalyses fluconazole(in) + ATP + H2O = fluconazole(out) + ADP + phosphate + H(+). Functionally, pleiotropic ABC efflux transporter that confers resistance to structurally and functionally unrelated compounds including azoles such as fluconazole (FLC), itraconazole (ITC), posaconazole (POS), and voriconazole (VRC). In Cryptococcus deuterogattii (strain R265) (Cryptococcus gattii VGII (strain R265)), this protein is ABC multidrug transporter AFR2.